Reading from the N-terminus, the 315-residue chain is Cross-pathway control WD-repeat protein 2 (315 aa).

7 WD repeats span residues 14 to 54 (GHKG…DSYG), 62 to 101 (GHNH…TTRR), 104 to 144 (GHTS…YDIK), 147 to 188 (CHTE…LKTN), 191 to 230 (GHTG…HLYS), 232 to 270 (EAGD…IVDE), and 282 to 315 (GRQP…TVTS).

This sequence belongs to the WD repeat G protein beta family. Ribosomal protein RACK1 subfamily.

In terms of biological role, component of the ribosome, a large ribonucleoprotein complex responsible for the synthesis of proteins in the cell. The small ribosomal subunit (SSU) binds messenger RNAs (mRNAs) and translates the encoded message by selecting cognate aminoacyl-transfer RNA (tRNA) molecules. The large subunit (LSU) contains the ribosomal catalytic site termed the peptidyl transferase center (PTC), which catalyzes the formation of peptide bonds, thereby polymerizing the amino acids delivered by tRNAs into a polypeptide chain. The nascent polypeptides leave the ribosome through a tunnel in the LSU and interact with protein factors that function in enzymatic processing, targeting, and the membrane insertion of nascent chains at the exit of the ribosomal tunnel. Plays in important role in the regulation of vegetative growth and fruiting body development. Especially, positively regulates the expression of genes involved in fruiting body development such as FVFD30 and FVFD16, as well as genes encoding for lectins and hydrophobins. Also regulates the expression of genes involved in cAMP signaling pathway. This is Cross-pathway control WD-repeat protein 2 from Flammulina velutipes (Agaricus velutipes).